A 260-amino-acid polypeptide reads, in one-letter code: MELDEVIITRAIFDEYSKTFLDYTDIDVALVGGGPANLVAAKYLAEAGVKVALYEQKLSLGGGMWAGGMMFPRIVVQEEATRILDDFGIRYKEYESGYYVANSVESVGKLIAGATSAGAEVFNLVSFEDIMIRENDRVTGIVINWGPVTTQRLHVDPLMIRTKLVIDGTGHEAVVCNTILRKIPNAKIGELGLLGEKPMWSEVGERLAVNATQEIYPGLIVAGMAANAATRAPRMGPVFGGMLLSGEKAAKLALDRLKTI.

NAD(+)-binding positions include A36, 55–56 (EQ), G63, and 154–156 (HVD). Residues D156 and H171 each contribute to the Fe cation site. M224 contacts NAD(+). R234 contributes to the glycine binding site.

The protein belongs to the THI4 family. As to quaternary structure, homooctamer; tetramer of dimers. The cofactor is Fe(2+).

It catalyses the reaction hydrogen sulfide + glycine + NAD(+) = ADP-5-ethyl-4-methylthiazole-2-carboxylate + nicotinamide + 3 H2O + H(+). Its pathway is cofactor biosynthesis; thiamine diphosphate biosynthesis. In terms of biological role, involved in the biosynthesis of the thiazole moiety of thiamine. Catalyzes the conversion of NAD and glycine to adenosine diphosphate 5-(2-hydroxyethyl)-4-methylthiazole-2-carboxylate (ADT), an adenylated thiazole intermediate, using free sulfide as a source of sulfur. This chain is Thiamine thiazole synthase, found in Methanosarcina acetivorans (strain ATCC 35395 / DSM 2834 / JCM 12185 / C2A).